A 498-amino-acid chain; its full sequence is Alpha-amylase A (498 aa).

Residues 1-21 (MMVAWWSLFLYGLQVAAPALA) form the signal peptide. The cysteines at positions 51 and 59 are disulfide-linked. Residues Q56 and W104 each contribute to the substrate site. N142 contributes to the Ca(2+) binding site. Residue H143 participates in substrate binding. C171 and C185 are joined by a disulfide. Ca(2+)-binding residues include E183 and D196. N218 carries N-linked (GlcNAc...) asparagine glycosylation. Residue R225 participates in substrate binding. Ca(2+)-binding residues include D227, H231, and E251. D227 functions as the Nucleophile in the catalytic mechanism. Substrate is bound at residue 230–231 (KH). The active-site Proton donor is E251. G255 contacts substrate. An intrachain disulfide couples C261 to C304. D318 and R365 together coordinate substrate. C461 and C496 are disulfide-bonded.

This sequence belongs to the glycosyl hydrolase 13 family. Ca(2+) serves as cofactor.

It catalyses the reaction Endohydrolysis of (1-&gt;4)-alpha-D-glucosidic linkages in polysaccharides containing three or more (1-&gt;4)-alpha-linked D-glucose units.. The chain is Alpha-amylase A (amyA) from Aspergillus awamori (Black koji mold).